We begin with the raw amino-acid sequence, 508 residues long: Light-independent protochlorophyllide reductase subunit B (508 aa).

D36 serves as a coordination point for [4Fe-4S] cluster. The Proton donor role is filled by D294. 429–430 (GM) is a substrate binding site.

Belongs to the ChlB/BchB/BchZ family. In terms of assembly, protochlorophyllide reductase is composed of three subunits; ChlL, ChlN and ChlB. Forms a heterotetramer of two ChlB and two ChlN subunits. [4Fe-4S] cluster serves as cofactor.

It localises to the plastid. The protein localises to the chloroplast. It carries out the reaction chlorophyllide a + oxidized 2[4Fe-4S]-[ferredoxin] + 2 ADP + 2 phosphate = protochlorophyllide a + reduced 2[4Fe-4S]-[ferredoxin] + 2 ATP + 2 H2O. It functions in the pathway porphyrin-containing compound metabolism; chlorophyll biosynthesis (light-independent). Functionally, component of the dark-operative protochlorophyllide reductase (DPOR) that uses Mg-ATP and reduced ferredoxin to reduce ring D of protochlorophyllide (Pchlide) to form chlorophyllide a (Chlide). This reaction is light-independent. The NB-protein (ChlN-ChlB) is the catalytic component of the complex. The sequence is that of Light-independent protochlorophyllide reductase subunit B from Pyropia yezoensis (Susabi-nori).